The chain runs to 238 residues: 3-dehydroquinate dehydratase (238 aa).

Residues 35–37 (ELR) and arginine 70 contribute to the 3-dehydroquinate site. The Proton donor/acceptor role is filled by histidine 133. The active-site Schiff-base intermediate with substrate is lysine 160. Arginine 202 and glutamine 225 together coordinate 3-dehydroquinate.

It belongs to the type-I 3-dehydroquinase family. In terms of assembly, homodimer.

It carries out the reaction 3-dehydroquinate = 3-dehydroshikimate + H2O. It functions in the pathway metabolic intermediate biosynthesis; chorismate biosynthesis; chorismate from D-erythrose 4-phosphate and phosphoenolpyruvate: step 3/7. Its function is as follows. Involved in the third step of the chorismate pathway, which leads to the biosynthesis of aromatic amino acids. Catalyzes the cis-dehydration of 3-dehydroquinate (DHQ) and introduces the first double bond of the aromatic ring to yield 3-dehydroshikimate. The polypeptide is 3-dehydroquinate dehydratase (Staphylococcus aureus (strain MRSA252)).